The primary structure comprises 240 residues: MRRKVLAGNWKMYKTRGEARAFLEAFVPLISPGAENREVILCGPFTCLDLLSAQAGPYAVGAQNVHWADHGAYTGEIAPQMLVELGVHYVIVGHSERREYFNETDSTVNRRLNNAQDHDLVPILCVGETESVRKDGITEAHIRSQLDRDLELVDMRRLIIAYEPIWAIGTGKTCEANEANRVCAMIRKHVNFEGVPILYGGSVKPENIDELMAQSDIDGVLVGGASLEAKSFARIVNFEV.

9 to 11 provides a ligand contact to substrate; that stretch reads NWK. Residue His94 is the Electrophile of the active site. Glu163 serves as the catalytic Proton acceptor. Substrate contacts are provided by residues Gly169, Ser202, and 223 to 224; that span reads GG.

This sequence belongs to the triosephosphate isomerase family. In terms of assembly, homodimer.

It localises to the cytoplasm. The catalysed reaction is D-glyceraldehyde 3-phosphate = dihydroxyacetone phosphate. It participates in carbohydrate biosynthesis; gluconeogenesis. Its pathway is carbohydrate degradation; glycolysis; D-glyceraldehyde 3-phosphate from glycerone phosphate: step 1/1. Functionally, involved in the gluconeogenesis. Catalyzes stereospecifically the conversion of dihydroxyacetone phosphate (DHAP) to D-glyceraldehyde-3-phosphate (G3P). This Gloeobacter violaceus (strain ATCC 29082 / PCC 7421) protein is Triosephosphate isomerase.